Reading from the N-terminus, the 289-residue chain is Probable protein phosphatase 2C 39 (289 aa).

The PPM-type phosphatase domain occupies Thr-41–Phe-288. Mn(2+) is bound by residues Asp-78, Gly-79, Asp-240, and Asp-279.

This sequence belongs to the PP2C family. Mg(2+) serves as cofactor. Mn(2+) is required as a cofactor.

It carries out the reaction O-phospho-L-seryl-[protein] + H2O = L-seryl-[protein] + phosphate. The catalysed reaction is O-phospho-L-threonyl-[protein] + H2O = L-threonyl-[protein] + phosphate. The polypeptide is Probable protein phosphatase 2C 39 (Arabidopsis thaliana (Mouse-ear cress)).